The chain runs to 98 residues: NADH-ubiquinone oxidoreductase chain 4L (98 aa).

The next 3 membrane-spanning stretches (helical) occupy residues M1–M21, S29–L49, and M59–V79.

Belongs to the complex I subunit 4L family. As to quaternary structure, core subunit of respiratory chain NADH dehydrogenase (Complex I) which is composed of 45 different subunits.

It localises to the mitochondrion inner membrane. It catalyses the reaction a ubiquinone + NADH + 5 H(+)(in) = a ubiquinol + NAD(+) + 4 H(+)(out). Functionally, core subunit of the mitochondrial membrane respiratory chain NADH dehydrogenase (Complex I) which catalyzes electron transfer from NADH through the respiratory chain, using ubiquinone as an electron acceptor. Part of the enzyme membrane arm which is embedded in the lipid bilayer and involved in proton translocation. The sequence is that of NADH-ubiquinone oxidoreductase chain 4L (MT-ND4L) from Cervus elaphus (Red deer).